An 84-amino-acid chain; its full sequence is Small ribosomal subunit protein uS17 (84 aa).

This sequence belongs to the universal ribosomal protein uS17 family. Part of the 30S ribosomal subunit.

One of the primary rRNA binding proteins, it binds specifically to the 5'-end of 16S ribosomal RNA. The polypeptide is Small ribosomal subunit protein uS17 (Buchnera aphidicola subsp. Cinara cedri (strain Cc)).